The chain runs to 1288 residues: Contactin-associated protein-like 3 (1288 aa).

The first 25 residues, 1–25 (MASVAWAVLKVLLLLPTQTWSPVGA), serve as a signal peptide directing secretion. Residues 26 to 1245 (GNPPDCDAPL…LVNADRRDSA (1220 aa)) lie on the Extracellular side of the membrane. One can recognise an F5/8 type C domain in the interval 31 to 177 (CDAPLASALP…IGMRIEVYGC (147 aa)). C31 and C177 form a disulfide bridge. Laminin G-like domains lie at 183–364 (VVYF…SFSC) and 370–545 (VPVT…IDSC). N-linked (GlcNAc...) asparagine glycans are attached at residues N285, N359, N441, and N497. The cysteines at positions 332 and 364 are disulfide-linked. 4 cysteine pairs are disulfide-bonded: C513–C545, C551–C562, C556–C571, and C573–C583. The 33-residue stretch at 551–583 (CLPSYCEHGGECSQSWDTFSCDCLGTGYTGETC) folds into the EGF-like 1 domain. The Fibrinogen C-terminal domain maps to 584–792 (HSSLYEQSCE…LLCRGDQSFW (209 aa)). N623 and N706 each carry an N-linked (GlcNAc...) asparagine glycan. The 166-residue stretch at 793-958 (NSASFNTETS…TVTPGVEPGC (166 aa)) folds into the Laminin G-like 3 domain. Intrachain disulfides connect C931–C958, C962–C975, C969–C984, and C986–C996. An EGF-like 2 domain is found at 962–996 (CSTYGHLCRNGGRCREKRRGVTCDCAFSAYDGPFC). Residues 1015-1203 (QEHYTLSENS…RGHVAPMARC (189 aa)) form the Laminin G-like 4 domain. N-linked (GlcNAc...) asparagine glycans are attached at residues N1023, N1073, and N1120. A disulfide bond links C1167 and C1203. The tract at residues 1215–1236 (ELAPRLAGGAGRSGPADEGEPL) is disordered. The helical transmembrane segment at 1246-1266 (VIGGVIAVVIFILLCITAIAI) threads the bilayer. Residues 1267–1288 (RIYQQRKLRKENESKVSKKEEC) are Cytoplasmic-facing.

Belongs to the neurexin family.

The protein localises to the cell membrane. It localises to the secreted. This Homo sapiens (Human) protein is Contactin-associated protein-like 3 (CNTNAP3).